Consider the following 125-residue polypeptide: Ly6/PLAUR domain-containing protein 2 (125 aa).

The first 22 residues, 1-22 (MRGTRLALLALVLAACGELAPA), serve as a signal peptide directing secretion. Positions 25–100 (CYVCPEPTGV…VSCCNTELCN (76 aa)) constitute a UPAR/Ly6 domain. N-linked (GlcNAc...) asparagine glycosylation occurs at Asn-46. Gly-103 is lipidated: GPI-anchor amidated glycine. Residues 104–125 (APALNSLHCGALTLLPLLSLRL) constitute a propeptide, removed in mature form.

It is found in the cell membrane. The protein is Ly6/PLAUR domain-containing protein 2 (LYPD2) of Homo sapiens (Human).